A 482-amino-acid polypeptide reads, in one-letter code: C3a anaphylatoxin chemotactic receptor (482 aa).

Residues Met1–Val23 lie on the Extracellular side of the membrane. Residue Asn9 is glycosylated (N-linked (GlcNAc...) asparagine). A helical transmembrane segment spans residues Ile24–Trp46. Topologically, residues Val47–Asn57 are cytoplasmic. The chain crosses the membrane as a helical span at residues Thr58–Ala80. The Extracellular segment spans residues His81–Lys96. An intrachain disulfide couples Cys95 to Cys172. The helical transmembrane segment at Leu97–Leu118 threads the bilayer. Residues Asp119–Ala139 are Cytoplasmic-facing. The chain crosses the membrane as a helical span at residues Cys140 to Tyr160. The Extracellular portion of the chain corresponds to Arg161 to Arg340. 2 positions are modified to sulfotyrosine: Tyr174 and Tyr184. Asn194 carries an N-linked (GlcNAc...) asparagine glycan. A glycan (O-linked (GalNAc...) serine) is linked at Ser266. Residue Tyr318 is modified to Sulfotyrosine. A helical membrane pass occupies residues Leu341 to Val360. At Phe361–Arg377 the chain is on the cytoplasmic side. The chain crosses the membrane as a helical span at residues Val378–Ser400. Residues Leu401–Asp417 are Extracellular-facing. Residues His418–Leu438 form a helical membrane-spanning segment. Residues Gly439 to Val482 lie on the Cytoplasmic side of the membrane. Ser459 bears the Phosphoserine mark. Thr463 carries the post-translational modification Phosphothreonine.

This sequence belongs to the G-protein coupled receptor 1 family. As to quaternary structure, interacts with VGF-derived peptide TLQP-21. In terms of processing, among the sulfation sites Tyr-174 is essential for binding of C3a anaphylatoxin. Post-translationally, O-glycosylated. In terms of tissue distribution, widely expressed in several differentiated hematopoietic cell lines, in the lung, spleen, ovary, placenta, small intestine, throughout the brain, heart, and endothelial cells. Mostly expressed in lymphoid tissues.

The protein localises to the cell membrane. Its function is as follows. Receptor for the chemotactic and inflammatory peptide anaphylatoxin C3a. This receptor stimulates chemotaxis, granule enzyme release and superoxide anion production. This Homo sapiens (Human) protein is C3a anaphylatoxin chemotactic receptor (C3AR1).